The chain runs to 113 residues: Small ribosomal subunit protein uS17 (113 aa).

It belongs to the universal ribosomal protein uS17 family. As to quaternary structure, part of the 30S ribosomal subunit.

Its function is as follows. One of the primary rRNA binding proteins, it binds specifically to the 5'-end of 16S ribosomal RNA. The polypeptide is Small ribosomal subunit protein uS17 (Sulfurisphaera tokodaii (strain DSM 16993 / JCM 10545 / NBRC 100140 / 7) (Sulfolobus tokodaii)).